The sequence spans 554 residues: Hydroxylamine reductase (554 aa).

Residues C3, C6, C18, and C25 each contribute to the [2Fe-2S] cluster site. 8 residues coordinate hybrid [4Fe-2O-2S] cluster: H252, E276, C320, C408, C436, C461, E495, and K497. The residue at position 408 (C408) is a Cysteine persulfide.

Belongs to the HCP family. Requires [2Fe-2S] cluster as cofactor. The cofactor is hybrid [4Fe-2O-2S] cluster.

Its subcellular location is the cytoplasm. The catalysed reaction is A + NH4(+) + H2O = hydroxylamine + AH2 + H(+). In terms of biological role, catalyzes the reduction of hydroxylamine to form NH(3) and H(2)O. This chain is Hydroxylamine reductase, found in Shewanella loihica (strain ATCC BAA-1088 / PV-4).